Reading from the N-terminus, the 447-residue chain is Trigger factor (447 aa).

The PPIase FKBP-type domain maps to 174–261; it reads GDIAVLGFKG…LKDLKTRELP (88 aa).

It belongs to the FKBP-type PPIase family. Tig subfamily.

Its subcellular location is the cytoplasm. The catalysed reaction is [protein]-peptidylproline (omega=180) = [protein]-peptidylproline (omega=0). Involved in protein export. Acts as a chaperone by maintaining the newly synthesized protein in an open conformation. Functions as a peptidyl-prolyl cis-trans isomerase. The chain is Trigger factor from Synechococcus sp. (strain CC9902).